The primary structure comprises 448 residues: Protein Z-dependent protease inhibitor (448 aa).

A signal peptide spans 1–21 (MRVASSLFLPVLLTEVWLVTS). The interval 33-70 (VHLESQDYENQTWEEYTRTDPREEEEEEEEKEEGKDEE) is disordered. Over residues 54-63 (REEEEEEEEK) the composition is skewed to acidic residues. An N-linked (GlcNAc...) asparagine glycan is attached at asparagine 81. The interval 140 to 157 (AGPLILPALFKKVKETFS) is heparin-binding. N-linked (GlcNAc...) asparagine glycans are attached at residues asparagine 184, asparagine 278, and asparagine 299.

This sequence belongs to the serpin family. Phosphorylated by FAM20C in the extracellular medium. As to expression, detectable in liver, but not in heart, brain, spleen, lung, kidney, skeletal muscle or testes.

It localises to the secreted. Its function is as follows. Inhibits activity of the coagulation protease factor Xa in the presence of PROZ, calcium and phospholipids. Also inhibits factor XIa in the absence of cofactors. The chain is Protein Z-dependent protease inhibitor (Serpina10) from Mus musculus (Mouse).